A 1137-amino-acid chain; its full sequence is Bone sialoprotein-binding protein (1137 aa).

Residues 1–52 form the signal peptide; that stretch reads MINRDNKKAITKKGMISNRLNKFSIRKYTVGTASILVGTTLIFGLGNQEAKA. The ligand binding A region stretch occupies residues 53–601; the sequence is AENTSTENAK…GDGTVKPEEK (549 aa). Disordered regions lie at residues 54–249 and 675–697; these read ENTS…TAPT and LPTK…VTVK. Residues 61-75 are compositionally biased toward basic and acidic residues; it reads AKQDEASASDNKEVV. A compositionally biased stretch (polar residues) spans 77-89; sequence ETENNSTQKNDLT. Residues 92 to 106 show a composition bias toward basic and acidic residues; sequence IKKETNTDSHQEAKE. Residues 109–126 show a composition bias toward low complexity; that stretch reads TTSSTQQQQNNATTSTET. The segment covering 130 to 145 has biased composition (basic and acidic residues); sequence NIEKENVKPSTDKTAT. Residues 158–207 are compositionally biased toward polar residues; the sequence is PNNTNNDVTTKPSTSEIQTTPTTPQESTNIENSQPQPTPSKVDNQVTDAT. Positions 216–241 are enriched in basic and acidic residues; sequence SKEELKNNPEKLKELVRNDSNTDRST. 3 CNA-B domains span residues 602–714, 715–824, and 825–935; these read LYKI…YKEP, KYNL…YKTP, and KYSL…EEDT. Residues 896–1112 are disordered; it reads TQTGTNTTED…TGSENNGSNN (217 aa). Acidic residues-rich tracts occupy residues 903–913 and 930–1076; these read TEDDKDADGGE and YFEE…DSDS. Residues 1100 to 1104 carry the LPXTG sorting signal motif; sequence LPETG. T1103 bears the Pentaglycyl murein peptidoglycan amidated threonine mark. The propeptide at 1104 to 1137 is removed by sortase; it reads GSENNGSNNATLFGGLFAALGSLLLFGRRKKQNK.

It belongs to the serine-aspartate repeat-containing protein (SDr) family.

Its subcellular location is the secreted. The protein localises to the cell wall. Functionally, specifically interacts with bone sialoprotein (BSP), a glycoprotein of bone and dentin extracellular matrix. Could contribute to staphylococcal osteomyelitis and arthritis. This Staphylococcus aureus (strain MRSA252) protein is Bone sialoprotein-binding protein (bbp).